A 92-amino-acid polypeptide reads, in one-letter code: Small ribosomal subunit protein uS19 (92 aa).

It belongs to the universal ribosomal protein uS19 family.

Its function is as follows. Protein S19 forms a complex with S13 that binds strongly to the 16S ribosomal RNA. This Vibrio vulnificus (strain CMCP6) protein is Small ribosomal subunit protein uS19.